Here is a 128-residue protein sequence, read N- to C-terminus: Iron-sulfur cluster insertion protein ErpA (128 aa).

Residues C56, C120, and C122 each contribute to the iron-sulfur cluster site.

Belongs to the HesB/IscA family. As to quaternary structure, homodimer. The cofactor is iron-sulfur cluster.

Its function is as follows. Required for insertion of 4Fe-4S clusters for at least IspG. This Xylella fastidiosa (strain M23) protein is Iron-sulfur cluster insertion protein ErpA.